Reading from the N-terminus, the 255-residue chain is RNA polymerase sigma-F factor (255 aa).

The Polymerase core binding signature appears at 61-74 (DLFQIGCIGLLKSV). Residues 221–240 (QSEVADRLGISQVQVSRLEK) constitute a DNA-binding region (H-T-H motif).

This sequence belongs to the sigma-70 factor family.

Its function is as follows. Sigma factors are initiation factors that promote the attachment of RNA polymerase to specific initiation sites and are then released. This sigma factor is responsible for the expression of sporulation specific genes. The sequence is that of RNA polymerase sigma-F factor (sigF) from Bacillus licheniformis.